The primary structure comprises 432 residues: Adenylosuccinate synthetase (432 aa).

GTP-binding positions include glycine 13–lysine 19 and glycine 41–threonine 43. The active-site Proton acceptor is aspartate 14. Positions 14 and 41 each coordinate Mg(2+). IMP contacts are provided by residues aspartate 14–lysine 17, asparagine 39–histidine 42, threonine 131, arginine 145, glutamine 226, threonine 241, and arginine 305. Histidine 42 acts as the Proton donor in catalysis. Serine 301–arginine 307 contributes to the substrate binding site. GTP-binding positions include arginine 307, lysine 333–aspartate 335, and serine 416–glycine 418.

Belongs to the adenylosuccinate synthetase family. In terms of assembly, homodimer. It depends on Mg(2+) as a cofactor.

Its subcellular location is the cytoplasm. The catalysed reaction is IMP + L-aspartate + GTP = N(6)-(1,2-dicarboxyethyl)-AMP + GDP + phosphate + 2 H(+). It functions in the pathway purine metabolism; AMP biosynthesis via de novo pathway; AMP from IMP: step 1/2. Plays an important role in the de novo pathway of purine nucleotide biosynthesis. Catalyzes the first committed step in the biosynthesis of AMP from IMP. The polypeptide is Adenylosuccinate synthetase (Neisseria meningitidis serogroup A / serotype 4A (strain DSM 15465 / Z2491)).